A 593-amino-acid polypeptide reads, in one-letter code: Tyrosine-protein phosphatase non-receptor type 9 (593 aa).

Met1 carries the post-translational modification N-acetylmethionine. Positions 1–20 (MEPATAPRPDMAPELTPEEE) are disordered. The region spanning 84–243 (EEPLRSEILS…NLGGYVKIDL (160 aa)) is the CRAL-TRIO domain. The region spanning 303-574 (IYEEYEDIRR…YFCYKAILEF (272 aa)) is the Tyrosine-protein phosphatase domain. The Phosphocysteine intermediate role is filled by Cys515.

It belongs to the protein-tyrosine phosphatase family. Non-receptor class 3 subfamily.

The protein localises to the cytoplasm. It carries out the reaction O-phospho-L-tyrosyl-[protein] + H2O = L-tyrosyl-[protein] + phosphate. Protein-tyrosine phosphatase that could participate in the transfer of hydrophobic ligands or in functions of the Golgi apparatus. In Mus musculus (Mouse), this protein is Tyrosine-protein phosphatase non-receptor type 9 (Ptpn9).